Here is a 157-residue protein sequence, read N- to C-terminus: Small ribosomal subunit protein uS7 (157 aa).

The protein belongs to the universal ribosomal protein uS7 family. In terms of assembly, part of the 30S ribosomal subunit. Contacts proteins S9 and S11.

Its function is as follows. One of the primary rRNA binding proteins, it binds directly to 16S rRNA where it nucleates assembly of the head domain of the 30S subunit. Is located at the subunit interface close to the decoding center, probably blocks exit of the E-site tRNA. This Chlamydia trachomatis serovar A (strain ATCC VR-571B / DSM 19440 / HAR-13) protein is Small ribosomal subunit protein uS7.